The following is a 164-amino-acid chain: Urease subunit beta (164 aa).

Composition is skewed to polar residues over residues 1–10 and 20–32; these read MSTKTNSTKA and TNRG…GYSE. Residues 1 to 32 are disordered; sequence MSTKTNSTKATSEKTDSLKTNRGTKSSAGYSE.

Belongs to the urease beta subunit family. In terms of assembly, heterotrimer of UreA (gamma), UreB (beta) and UreC (alpha) subunits. Three heterotrimers associate to form the active enzyme.

The protein resides in the cytoplasm. The enzyme catalyses urea + 2 H2O + H(+) = hydrogencarbonate + 2 NH4(+). It functions in the pathway nitrogen metabolism; urea degradation; CO(2) and NH(3) from urea (urease route): step 1/1. This chain is Urease subunit beta, found in Yersinia enterocolitica serotype O:8 / biotype 1B (strain NCTC 13174 / 8081).